Reading from the N-terminus, the 489-residue chain is Cysteine--tRNA ligase (489 aa).

Cys27 lines the Zn(2+) pocket. The 'HIGH' region signature appears at 29–39 (VTVYDLCHLGH). Positions 211, 236, and 240 each coordinate Zn(2+). Residues 268 to 272 (KMSKS) carry the 'KMSKS' region motif. Residue Lys271 coordinates ATP.

This sequence belongs to the class-I aminoacyl-tRNA synthetase family. In terms of assembly, monomer. Zn(2+) serves as cofactor.

Its subcellular location is the cytoplasm. The catalysed reaction is tRNA(Cys) + L-cysteine + ATP = L-cysteinyl-tRNA(Cys) + AMP + diphosphate. The protein is Cysteine--tRNA ligase of Prochlorococcus marinus (strain MIT 9215).